The primary structure comprises 247 residues: Carboxy-S-adenosyl-L-methionine synthase (247 aa).

S-adenosyl-L-methionine-binding positions include Tyr-38, 63–65 (GCS), Asn-131, and Arg-198.

Belongs to the class I-like SAM-binding methyltransferase superfamily. Cx-SAM synthase family. Homodimer.

The catalysed reaction is prephenate + S-adenosyl-L-methionine = carboxy-S-adenosyl-L-methionine + 3-phenylpyruvate + H2O. In terms of biological role, catalyzes the conversion of S-adenosyl-L-methionine (SAM) to carboxy-S-adenosyl-L-methionine (Cx-SAM). This is Carboxy-S-adenosyl-L-methionine synthase from Desulforapulum autotrophicum (strain ATCC 43914 / DSM 3382 / VKM B-1955 / HRM2) (Desulfobacterium autotrophicum).